The sequence spans 481 residues: Probable glycine dehydrogenase (decarboxylating) subunit 2 (481 aa).

Positions 1–26 (MVIFEKTRGKNSPSVMPSKKGDVSNI) are disordered. K263 is subject to N6-(pyridoxal phosphate)lysine.

The protein belongs to the GcvP family. C-terminal subunit subfamily. The glycine cleavage system is composed of four proteins: P, T, L and H. In this organism, the P 'protein' is a heterodimer of two subunits. Requires pyridoxal 5'-phosphate as cofactor.

It carries out the reaction N(6)-[(R)-lipoyl]-L-lysyl-[glycine-cleavage complex H protein] + glycine + H(+) = N(6)-[(R)-S(8)-aminomethyldihydrolipoyl]-L-lysyl-[glycine-cleavage complex H protein] + CO2. In terms of biological role, the glycine cleavage system catalyzes the degradation of glycine. The P protein binds the alpha-amino group of glycine through its pyridoxal phosphate cofactor; CO(2) is released and the remaining methylamine moiety is then transferred to the lipoamide cofactor of the H protein. This chain is Probable glycine dehydrogenase (decarboxylating) subunit 2, found in Francisella tularensis subsp. mediasiatica (strain FSC147).